Consider the following 37-residue polypeptide: Large ribosomal subunit protein bL36c (37 aa).

The protein belongs to the bacterial ribosomal protein bL36 family.

Its subcellular location is the plastid. The protein localises to the chloroplast. The sequence is that of Large ribosomal subunit protein bL36c from Cyanidioschyzon merolae (strain NIES-3377 / 10D) (Unicellular red alga).